The following is a 43-amino-acid chain: Defensin-A (43 aa).

3 cysteine pairs are disulfide-bonded: C3-C34, C20-C39, and C24-C41.

The protein localises to the secreted. Antibacterial protein. Strong activity against the Gram-positive bacteria M.luteus, B.megaterium and S.aureus. Reduced activity against Gram-positive bacterium B.subtilis and weak activity against Gram-negative bacterium X.japonicus. No detectable activity against the Gram-negative bacteria E.asbriae, E.coli, P.aeruginosa and S.marcescens. This is Defensin-A from Anomala cuprea (Cupreous chafer beetle).